The sequence spans 372 residues: Transaldolase 2 (372 aa).

Catalysis depends on lysine 140, which acts as the Schiff-base intermediate with substrate.

Belongs to the transaldolase family. Type 2 subfamily.

The protein resides in the cytoplasm. The enzyme catalyses D-sedoheptulose 7-phosphate + D-glyceraldehyde 3-phosphate = D-erythrose 4-phosphate + beta-D-fructose 6-phosphate. It functions in the pathway carbohydrate degradation; pentose phosphate pathway; D-glyceraldehyde 3-phosphate and beta-D-fructose 6-phosphate from D-ribose 5-phosphate and D-xylulose 5-phosphate (non-oxidative stage): step 2/3. In terms of biological role, transaldolase is important for the balance of metabolites in the pentose-phosphate pathway. The chain is Transaldolase 2 from Streptomyces coelicolor (strain ATCC BAA-471 / A3(2) / M145).